A 494-amino-acid polypeptide reads, in one-letter code: Glycerol kinase (494 aa).

Threonine 13 is an ADP binding site. Positions 13, 14, and 15 each coordinate ATP. Position 13 (threonine 13) interacts with sn-glycerol 3-phosphate. ADP is bound at residue arginine 17. Residues arginine 83, glutamate 84, tyrosine 135, and aspartate 244 each contribute to the sn-glycerol 3-phosphate site. Glycerol contacts are provided by arginine 83, glutamate 84, tyrosine 135, aspartate 244, and glutamine 245. Threonine 266 and glycine 309 together coordinate ADP. Residues threonine 266, glycine 309, glutamine 313, and glycine 410 each contribute to the ATP site. 2 residues coordinate ADP: glycine 410 and asparagine 414.

Belongs to the FGGY kinase family.

The enzyme catalyses glycerol + ATP = sn-glycerol 3-phosphate + ADP + H(+). The protein operates within polyol metabolism; glycerol degradation via glycerol kinase pathway; sn-glycerol 3-phosphate from glycerol: step 1/1. With respect to regulation, inhibited by fructose 1,6-bisphosphate (FBP). Its function is as follows. Key enzyme in the regulation of glycerol uptake and metabolism. Catalyzes the phosphorylation of glycerol to yield sn-glycerol 3-phosphate. The polypeptide is Glycerol kinase (Shewanella oneidensis (strain ATCC 700550 / JCM 31522 / CIP 106686 / LMG 19005 / NCIMB 14063 / MR-1)).